Reading from the N-terminus, the 1361-residue chain is Protein transport protein SEC16B homolog (1361 aa).

Phosphoserine is present on Ser-46. Disordered regions lie at residues Asn-82 to Ala-109, Val-487 to Pro-513, Pro-984 to Thr-1013, Ser-1025 to Pro-1062, Glu-1163 to Arg-1204, Asn-1216 to Ala-1235, and Ser-1306 to Leu-1361. Positions Pro-491–Ser-503 are enriched in low complexity. A compositionally biased stretch (polar residues) spans Thr-996–Thr-1013. Composition is skewed to polar residues over residues Ile-1169–Ser-1200, Asn-1222–Thr-1234, and Asn-1308–Gly-1325. Over residues Asn-1326–Glu-1354 the composition is skewed to low complexity.

It belongs to the SEC16 family.

The protein resides in the golgi apparatus. The protein localises to the endoplasmic reticulum. In terms of biological role, required for protein transport from the endoplasmic reticulum to the Golgi apparatus. This Arabidopsis thaliana (Mouse-ear cress) protein is Protein transport protein SEC16B homolog.